The following is a 265-amino-acid chain: Hydroxyethylthiazole kinase (265 aa).

Substrate is bound at residue Met-50. Residues Arg-125 and Thr-171 each coordinate ATP. Gly-198 serves as a coordination point for substrate.

This sequence belongs to the Thz kinase family. Requires Mg(2+) as cofactor.

It carries out the reaction 5-(2-hydroxyethyl)-4-methylthiazole + ATP = 4-methyl-5-(2-phosphooxyethyl)-thiazole + ADP + H(+). The protein operates within cofactor biosynthesis; thiamine diphosphate biosynthesis; 4-methyl-5-(2-phosphoethyl)-thiazole from 5-(2-hydroxyethyl)-4-methylthiazole: step 1/1. In terms of biological role, catalyzes the phosphorylation of the hydroxyl group of 4-methyl-5-beta-hydroxyethylthiazole (THZ). This Salmonella paratyphi A (strain ATCC 9150 / SARB42) protein is Hydroxyethylthiazole kinase.